Consider the following 1021-residue polypeptide: Transmembrane protein 132A (1021 aa).

The N-terminal stretch at 1–32 (MTERAAAAPRGPYGAWLCLLVALALEVVRVGS) is a signal peptide. The Extracellular segment spans residues 33–848 (NQNTLDPIYL…VTDLELGMYA (816 aa)). The disordered stretch occupies residues 207-226 (PAGEGPGGCGPGTEEEPKEQ). A glycan (N-linked (GlcNAc...) asparagine) is linked at Asn-276. The segment at 606 to 913 (IEVRSPLSDS…QLDRCSSSSP (308 aa)) is binds to HSPA5/GRP78. Residues 666-1021 (LPAPKQEVAL…NYMERIRGSS (356 aa)) form a confers cellular localization similar to full-length form region. A disordered region spans residues 793-835 (AGDMGSHVGPGIRGKFERAEEEAGKEENEAKEEEEDEEEMVPA). A compositionally biased stretch (basic and acidic residues) spans 806 to 820 (GKFERAEEEAGKEEN). Acidic residues predominate over residues 821–832 (EAKEEEEDEEEM). A helical membrane pass occupies residues 849 to 869 (LLGIFCLAFLIFLVNGVVFVL). The Cytoplasmic portion of the chain corresponds to 870–1021 (RYQRKEPPDS…NYMERIRGSS (152 aa)). Residues 903–955 (RQLDRCSSSSPPKGEGGCPCESGAGGDTSTVAPSASESPAGSTSTLARKEAGG) are disordered. Residues 929–948 (DTSTVAPSASESPAGSTSTL) show a composition bias toward polar residues.

Belongs to the TMEM132 family. In terms of assembly, interacts with HSPA5/GRP78. Expressed in the brain in neuronal cells of the hypothalamus, thalamus, cerebral cortex, amygdala, and cerebellum.

The protein localises to the golgi apparatus membrane. The protein resides in the endoplasmic reticulum membrane. Functionally, may play a role in embryonic and postnatal development of the brain. Increased resistance to cell death induced by serum starvation in cultured cells. Regulates cAMP-induced GFAP gene expression via STAT3 phosphorylation. In Rattus norvegicus (Rat), this protein is Transmembrane protein 132A (Tmem132a).